Reading from the N-terminus, the 473-residue chain is Photosystem II CP43 reaction center protein (473 aa).

The propeptide occupies 1 to 14; sequence MKTLYSLRRFYHVE. The residue at position 15 (T15) is an N-acetylthreonine. Position 15 is a phosphothreonine (T15). 5 helical membrane-spanning segments follow: residues 69–93, 134–155, 178–200, 255–275, and 291–312; these read LFEV…PHLA, LLGP…KDRN, KALY…RKIT, KPFA…LSYS, and WFNN…ASQA. Residue E367 coordinates [CaMn4O5] cluster. Residues 447–471 form a helical membrane-spanning segment; that stretch reads RARAAAAGFEKGIDRDFEPVLSMTP.

This sequence belongs to the PsbB/PsbC family. PsbC subfamily. As to quaternary structure, PSII is composed of 1 copy each of membrane proteins PsbA, PsbB, PsbC, PsbD, PsbE, PsbF, PsbH, PsbI, PsbJ, PsbK, PsbL, PsbM, PsbT, PsbX, PsbY, PsbZ, Psb30/Ycf12, at least 3 peripheral proteins of the oxygen-evolving complex and a large number of cofactors. It forms dimeric complexes. It depends on Binds multiple chlorophylls and provides some of the ligands for the Ca-4Mn-5O cluster of the oxygen-evolving complex. It may also provide a ligand for a Cl- that is required for oxygen evolution. PSII binds additional chlorophylls, carotenoids and specific lipids. as a cofactor.

It is found in the plastid. It localises to the chloroplast thylakoid membrane. Functionally, one of the components of the core complex of photosystem II (PSII). It binds chlorophyll and helps catalyze the primary light-induced photochemical processes of PSII. PSII is a light-driven water:plastoquinone oxidoreductase, using light energy to abstract electrons from H(2)O, generating O(2) and a proton gradient subsequently used for ATP formation. This Chloranthus spicatus (Chulantree) protein is Photosystem II CP43 reaction center protein.